Here is a 937-residue protein sequence, read N- to C-terminus: MTSSVSNLLTSDKETLSLRTWTPKVKPIATVTMIHGLGEHSGRYEHVFSRFAEQGIKVNAFDQRGHGISSGVRGHSPSLEQSLKDIQLIASTAETDVPHFIYGHSFGGCLALHYNLKKKDHHPAGCIVTSPLIKPAIKVSGVKLSMGNLLGGLMPSWTISNSIDPTLISKDSAVVNEYKQDKLVHNKISLGMAKWMLQRSEQLIDLAPQFDTPLLLVHANDDKITCPKASQQFYDRVPSTVDKTLKLWENMYHEVHNEFAKEEFVTYILEWIKERIENAKNESPSSNINTTTTSTTTTTTTTTSSPVVEESKPVVEESKPVVEESKPVVEESKPVVEESKPEPVVDDSKEKEEKERLEKEEAAAKLEKERLEKEEAERVAKEAEEKRIKDEKEAQENLEKQQQEAAAAAQAEKERLEKEEADKLEKERLEAEAAAAAQAEKERLEAEAAAAAQAEKERLEAEAAAAVQAEKERLEKEEADRLEKEKLEAEAAAATQAEKERLEAEAAAAAQAEKERLEKEETERLEKEKLEAEAAAAAQAEKEKLEAEAAAAAQAEKERLEAEAAAAAQAEKERLEAEAAAAAQAEKERLEAEAAAAAQAEKEEAERLEKEKLEAEAAAAQAEKERLEAEAAAAAQAEKERLEAEAAAAAQAEKEKLEAEAEAAAQAEKERLEKEEAERLEKEKLEAEAAAAQAEKERLEAEAAAAAQAEKEKLEAEAAAAQAEKERLEAEAAAAAQAEKERLEKEETERLEKERLEAEAAAAQAEKERLEAEAAAAAQAEKERLEAEAAAEKAAEETKVEEPVQEETKVEEPVQEEIKVEEPVQEETKVEEPVQEETKVEEPVQEETKVEEPVQEETKVEEPVQEETKVEESTTEQAKPTETENKEETEEGEEVDEASNTTTEQTTTNANQPKKPNNNNNNNKGKGKKGKGKGGRK.

Thr-2 carries the post-translational modification N-acetylthreonine. Residues 281 to 937 (NESPSSNINT…KKGKGKGGRK (657 aa)) are disordered. Positions 290-308 (TTTTSTTTTTTTTTSSPVV) are enriched in low complexity. Residue Thr-292 is the Charge relay system of the active site. 8 stretches are compositionally biased toward basic and acidic residues: residues 309–402 (EESK…EKQQ), 411–431 (AEKERLEKEEADKLEKERLEA), 469–489 (AEKERLEKEEADRLEKEKLEA), 512–532 (AEKERLEKEETERLEKEKLEA), 600–615 (AEKEEAERLEKEKLEA), 667–687 (AEKERLEKEEAERLEKEKLEA), 738–758 (AEKERLEKEETERLEKERLEA), and 780–872 (AEKE…KVEE). The stretch at 345 to 802 (VDDSKEKEEK…KAAEETKVEE (458 aa)) forms a coiled coil. Acidic residues predominate over residues 887–897 (EETEEGEEVDE). Residues 898–924 (ASNTTTEQTTTNANQPKKPNNNNNNNK) show a composition bias toward low complexity. Positions 925 to 937 (GKGKKGKGKGGRK) are enriched in basic residues.

The protein belongs to the AB hydrolase superfamily.

This is an uncharacterized protein from Dictyostelium discoideum (Social amoeba).